The following is a 43-amino-acid chain: Photosystem II reaction center protein K (43 aa).

Residues 1–6 (MSLLLA) constitute a propeptide that is removed on maturation. The helical transmembrane segment at 18 to 38 (IVDVLPIIPVLFLLLAFVWQA) threads the bilayer.

It belongs to the PsbK family. In terms of assembly, PSII is composed of 1 copy each of membrane proteins PsbA, PsbB, PsbC, PsbD, PsbE, PsbF, PsbH, PsbI, PsbJ, PsbK, PsbL, PsbM, PsbT, PsbX, PsbY, PsbZ, Psb30/Ycf12, at least 3 peripheral proteins of the oxygen-evolving complex and a large number of cofactors. It forms dimeric complexes.

The protein resides in the plastid. It is found in the chloroplast thylakoid membrane. One of the components of the core complex of photosystem II (PSII). PSII is a light-driven water:plastoquinone oxidoreductase that uses light energy to abstract electrons from H(2)O, generating O(2) and a proton gradient subsequently used for ATP formation. It consists of a core antenna complex that captures photons, and an electron transfer chain that converts photonic excitation into a charge separation. The polypeptide is Photosystem II reaction center protein K (Oltmannsiellopsis viridis (Marine flagellate)).